A 101-amino-acid chain; its full sequence is DNA-binding protein Fis (101 aa).

Residues 77-96 (QTRAANMLGINRGTLRKKLK) constitute a DNA-binding region (H-T-H motif).

It belongs to the transcriptional regulatory Fis family. In terms of assembly, homodimer.

Its function is as follows. Activates ribosomal RNA transcription. Plays a direct role in upstream activation of rRNA promoters. The protein is DNA-binding protein Fis of Shewanella amazonensis (strain ATCC BAA-1098 / SB2B).